Reading from the N-terminus, the 201-residue chain is Cytochrome c biogenesis ATP-binding export protein CcmA (201 aa).

The ABC transporter domain occupies Leu-3–Ala-200. Gly-35–Ser-42 serves as a coordination point for ATP.

The protein belongs to the ABC transporter superfamily. CcmA exporter (TC 3.A.1.107) family. As to quaternary structure, the complex is composed of two ATP-binding proteins (CcmA) and two transmembrane proteins (CcmB).

It localises to the cell inner membrane. It carries out the reaction heme b(in) + ATP + H2O = heme b(out) + ADP + phosphate + H(+). In terms of biological role, part of the ABC transporter complex CcmAB involved in the biogenesis of c-type cytochromes; once thought to export heme, this seems not to be the case, but its exact role is uncertain. Responsible for energy coupling to the transport system. The sequence is that of Cytochrome c biogenesis ATP-binding export protein CcmA from Mesorhizobium japonicum (strain LMG 29417 / CECT 9101 / MAFF 303099) (Mesorhizobium loti (strain MAFF 303099)).